The following is a 419-amino-acid chain: Zinc finger protein Pegasus (419 aa).

A Glycyl lysine isopeptide (Lys-Gly) (interchain with G-Cter in SUMO2) cross-link involves residue Lys5. 3 C2H2-type zinc fingers span residues 82 to 104, 110 to 132, and 138 to 161; these read LKCR…IRIH, HRCH…MRSH, and YKCE…RRKH. A Glycyl lysine isopeptide (Lys-Gly) (interchain with G-Cter in SUMO2) cross-link involves residue Lys185. 2 stretches are compositionally biased toward polar residues: residues 223–236 and 262–273; these read QTDS…TTPT and LSSLPPENQNPA. 2 disordered regions span residues 223–247 and 262–356; these read QTDS…QELM and LSSL…PALP. Residues 290 to 311 are compositionally biased toward low complexity; the sequence is QPSTQAVVSAVSASIPQSSSPT. Positions 332-349 are enriched in polar residues; sequence SEPSAHTSTPSIGNSQPS. 2 consecutive C2H2-type zinc fingers follow at residues 364–386 and 392–416; these read HHCQ…MGCH and FQCN…RGQH.

This sequence belongs to the Ikaros C2H2-type zinc-finger protein family. As to quaternary structure, self-associates. Interacts with other family members; IKZF1, IKZF2, IKZF3 and IKZF4. In terms of tissue distribution, expressed in brain, heart, skeletal muscle, kidney, and liver. Expressed in the hematopoietic cell lines MOLT-4, NALM-6 and K-562. Highly expressed in THP-1 and M-07e cell lines, which have characteristics of myeloid and early megakaryocytic cells respectively.

It localises to the nucleus. In terms of biological role, transcriptional repressor that binds the core 5'GNNTGTNG-3' DNA consensus sequence. Involved in megakaryocyte differentiation. The sequence is that of Zinc finger protein Pegasus (IKZF5) from Homo sapiens (Human).